Reading from the N-terminus, the 103-residue chain is Integration host factor subunit alpha (103 aa).

Belongs to the bacterial histone-like protein family. Heterodimer of an alpha and a beta chain.

Functionally, this protein is one of the two subunits of integration host factor, a specific DNA-binding protein that functions in genetic recombination as well as in transcriptional and translational control. In Aromatoleum aromaticum (strain DSM 19018 / LMG 30748 / EbN1) (Azoarcus sp. (strain EbN1)), this protein is Integration host factor subunit alpha.